The following is a 237-amino-acid chain: Ribonuclease PH (237 aa).

Phosphate contacts are provided by residues Arg86 and 124–126 (GTR).

Belongs to the RNase PH family. In terms of assembly, homohexameric ring arranged as a trimer of dimers.

It catalyses the reaction tRNA(n+1) + phosphate = tRNA(n) + a ribonucleoside 5'-diphosphate. Its function is as follows. Phosphorolytic 3'-5' exoribonuclease that plays an important role in tRNA 3'-end maturation. Removes nucleotide residues following the 3'-CCA terminus of tRNAs; can also add nucleotides to the ends of RNA molecules by using nucleoside diphosphates as substrates, but this may not be physiologically important. Probably plays a role in initiation of 16S rRNA degradation (leading to ribosome degradation) during starvation. This is Ribonuclease PH from Pseudoalteromonas translucida (strain TAC 125).